The following is a 484-amino-acid chain: Ribosomal protein uS12 methylthiotransferase RimO (484 aa).

Residues 8–119 enclose the MTTase N-terminal domain; sequence RRVAMVTLGC…LAERLDDVLA (112 aa). [4Fe-4S] cluster-binding residues include C17, C53, C82, C184, C188, and C191. In terms of domain architecture, Radical SAM core spans 170–401; it reads LDDSPLAALK…ALADELVAQR (232 aa). In terms of domain architecture, TRAM spans 403-469; the sequence is EDRVGTEVRV…GVDLVVRPVG (67 aa).

The protein belongs to the methylthiotransferase family. RimO subfamily. [4Fe-4S] cluster is required as a cofactor.

The protein resides in the cytoplasm. It carries out the reaction L-aspartate(89)-[ribosomal protein uS12]-hydrogen + (sulfur carrier)-SH + AH2 + 2 S-adenosyl-L-methionine = 3-methylsulfanyl-L-aspartate(89)-[ribosomal protein uS12]-hydrogen + (sulfur carrier)-H + 5'-deoxyadenosine + L-methionine + A + S-adenosyl-L-homocysteine + 2 H(+). Functionally, catalyzes the methylthiolation of an aspartic acid residue of ribosomal protein uS12. The protein is Ribosomal protein uS12 methylthiotransferase RimO of Saccharopolyspora erythraea (strain ATCC 11635 / DSM 40517 / JCM 4748 / NBRC 13426 / NCIMB 8594 / NRRL 2338).